A 203-amino-acid chain; its full sequence is Cryptic neisserial protein 1 (203 aa).

Residues 1–18 (MRRAILLILTLTVGTSLA) form the signal peptide.

It belongs to the Cnp family.

The protein resides in the periplasm. Its subcellular location is the cytoplasm. This is Cryptic neisserial protein 1 from Neisseria gonorrhoeae (strain ATCC 700825 / FA 1090).